Consider the following 38-residue polypeptide: Cytochrome b6-f complex subunit 5 (38 aa).

A helical membrane pass occupies residues 5-25 (LLSGIVLGSIPITLAGSFVTA).

The protein belongs to the PetG family. The 4 large subunits of the cytochrome b6-f complex are cytochrome b6, subunit IV (17 kDa polypeptide, PetD), cytochrome f and the Rieske protein, while the 4 small subunits are PetG, PetL, PetM and PetN. The complex functions as a dimer.

Its subcellular location is the plastid. The protein localises to the chloroplast thylakoid membrane. Component of the cytochrome b6-f complex, which mediates electron transfer between photosystem II (PSII) and photosystem I (PSI), cyclic electron flow around PSI, and state transitions. PetG is required for either the stability or assembly of the cytochrome b6-f complex. This is Cytochrome b6-f complex subunit 5 from Huperzia lucidula (Shining clubmoss).